Consider the following 1024-residue polypeptide: Beta-galactosidase (1024 aa).

The substrate site is built by Asn-103 and Asp-202. Residue Asp-202 participates in Na(+) binding. Mg(2+)-binding residues include Glu-417, His-419, and Glu-462. Substrate-binding positions include Glu-462 and 538–541 (EYAH). Catalysis depends on Glu-462, which acts as the Proton donor. Glu-538 acts as the Nucleophile in catalysis. Residue Asn-598 coordinates Mg(2+). Na(+) is bound by residues Phe-602 and Asn-605. Residues Asn-605 and Trp-1000 each coordinate substrate.

The protein belongs to the glycosyl hydrolase 2 family. Homotetramer. It depends on Mg(2+) as a cofactor. The cofactor is Na(+).

The catalysed reaction is Hydrolysis of terminal non-reducing beta-D-galactose residues in beta-D-galactosides.. The chain is Beta-galactosidase from Klebsiella pneumoniae.